A 631-amino-acid polypeptide reads, in one-letter code: Chaperone protein DnaK (631 aa).

Residue T197 is modified to Phosphothreonine; by autocatalysis. Residues 599–631 (AQSDAGAAGSASEENTTSNEKVVDADFEDVEKK) are disordered. Residues 603 to 612 (AGAAGSASEE) show a composition bias toward low complexity.

The protein belongs to the heat shock protein 70 family.

In terms of biological role, acts as a chaperone. In Rickettsia bellii (strain RML369-C), this protein is Chaperone protein DnaK.